Consider the following 512-residue polypeptide: Maturase K (512 aa).

It belongs to the intron maturase 2 family. MatK subfamily.

It is found in the plastid. The protein resides in the chloroplast. Functionally, usually encoded in the trnK tRNA gene intron. Probably assists in splicing its own and other chloroplast group II introns. The polypeptide is Maturase K (Daucus carota (Wild carrot)).